Here is a 178-residue protein sequence, read N- to C-terminus: uncharacterized protein (178 aa).

A helical membrane pass occupies residues 7 to 29 (FFVIFSILWGSLFLFSIIGSLGT).

It localises to the membrane. This is an uncharacterized protein from Bacillus subtilis (strain 168).